Here is a 208-residue protein sequence, read N- to C-terminus: Large ribosomal subunit protein uL4 (208 aa).

The tract at residues 45–89 (RQGTHAHKNRSAVSGGGKKPWRQKGTGRARQGSTRSPQWRGGGTV) is disordered.

It belongs to the universal ribosomal protein uL4 family. As to quaternary structure, part of the 50S ribosomal subunit.

Its function is as follows. One of the primary rRNA binding proteins, this protein initially binds near the 5'-end of the 23S rRNA. It is important during the early stages of 50S assembly. It makes multiple contacts with different domains of the 23S rRNA in the assembled 50S subunit and ribosome. Functionally, forms part of the polypeptide exit tunnel. This is Large ribosomal subunit protein uL4 from Lactococcus lactis subsp. cremoris (strain SK11).